The chain runs to 397 residues: 2-aminoadipate transaminase (397 aa).

Substrate is bound at residue glycine 40. Residues tyrosine 70, 100–101 (SQ), asparagine 174, 202–205 (DDAY), 235–237 (SFS), and arginine 245 each bind pyridoxal 5'-phosphate. Asparagine 174 contacts substrate. Position 263 is an N6-(pyridoxal phosphate)lysine (lysine 263). Arginine 368 is a substrate binding site.

The protein belongs to the class-I pyridoxal-phosphate-dependent aminotransferase family. In terms of assembly, homodimer. The cofactor is pyridoxal 5'-phosphate.

It catalyses the reaction L-2-aminoadipate + 2-oxoglutarate = 2-oxoadipate + L-glutamate. Its pathway is amino-acid biosynthesis; L-lysine biosynthesis via AAA pathway; L-alpha-aminoadipate from 2-oxoglutarate: step 5/5. Catalyzes the transfer of an amino group between 2-oxoadipate (2-OA) and glutamate (Glu) to yield alpha-aminodipate (AAA). It can also transaminate glutamate, leucine, and aromatic amino acids. It also contributes in the biosynthesis of other amino acids such as leucine. The chain is 2-aminoadipate transaminase (lysN) from Thermus thermophilus (strain ATCC BAA-163 / DSM 7039 / HB27).